We begin with the raw amino-acid sequence, 504 residues long: Probable cytochrome P450 305a1 (504 aa).

Cys-450 contributes to the heme binding site.

This sequence belongs to the cytochrome P450 family. It depends on heme as a cofactor.

It localises to the endoplasmic reticulum membrane. The protein resides in the microsome membrane. May be involved in the metabolism of insect hormones and in the breakdown of synthetic insecticides. The chain is Probable cytochrome P450 305a1 (Cyp305a1) from Drosophila melanogaster (Fruit fly).